The sequence spans 100 residues: Small ribosomal subunit protein bS20 (100 aa).

Over residues 1 to 18 (MPNKKSAEKRVRQSEQRR) the composition is skewed to basic and acidic residues. The disordered stretch occupies residues 1–26 (MPNKKSAEKRVRQSEQRRQKNRGYQK).

It belongs to the bacterial ribosomal protein bS20 family.

In terms of biological role, binds directly to 16S ribosomal RNA. The protein is Small ribosomal subunit protein bS20 of Petrotoga mobilis (strain DSM 10674 / SJ95).